The sequence spans 108 residues: Iron-sulfur cluster assembly protein CyaY (108 aa).

The protein belongs to the frataxin family.

Its function is as follows. Involved in iron-sulfur (Fe-S) cluster assembly. May act as a regulator of Fe-S biogenesis. This is Iron-sulfur cluster assembly protein CyaY from Pseudomonas aeruginosa (strain ATCC 15692 / DSM 22644 / CIP 104116 / JCM 14847 / LMG 12228 / 1C / PRS 101 / PAO1).